The chain runs to 242 residues: Probable 2-phosphosulfolactate phosphatase (242 aa).

The protein belongs to the ComB family. Mg(2+) is required as a cofactor.

The catalysed reaction is (2R)-O-phospho-3-sulfolactate + H2O = (2R)-3-sulfolactate + phosphate. This Caldicellulosiruptor saccharolyticus (strain ATCC 43494 / DSM 8903 / Tp8T 6331) protein is Probable 2-phosphosulfolactate phosphatase.